Reading from the N-terminus, the 276-residue chain is Rho-related protein racO (276 aa).

11–18 (GDGLIGKT) contacts GTP. The Effector region motif lies at 34-42 (YSSFDSEYL). GTP contacts are provided by residues 60-64 (ENDGF) and 124-127 (IKTD). Residues 199 to 276 (FKNNNNNNNY…NKTTNKCKIS (78 aa)) form a disordered region. Residues 200 to 270 (KNNNNNNNYN…SYKNHNNKTT (71 aa)) are compositionally biased toward low complexity. C273 bears the Cysteine methyl ester mark. C273 is lipidated: S-geranylgeranyl cysteine. Positions 274 to 276 (KIS) are cleaved as a propeptide — removed in mature form.

Belongs to the small GTPase superfamily. Rho family.

It is found in the cell membrane. The protein is Rho-related protein racO (racO) of Dictyostelium discoideum (Social amoeba).